The sequence spans 35 residues: Bacteriocin SRCAM 1580 (35 aa).

Belongs to the bacteriocin class IIA/YGNGV family.

The protein resides in the secreted. Its function is as follows. Bacteriocin with antibacterial activity against C.jejuni. The sequence is that of Bacteriocin SRCAM 1580 from Niallia circulans (Bacillus circulans).